A 300-amino-acid chain; its full sequence is Vetispiradiene synthase 2 (300 aa).

Residues aspartate 54, aspartate 58, aspartate 197, threonine 201, and glutamate 205 each coordinate Mg(2+). Positions 54-58 match the DDXXD motif motif; it reads DDTFD.

The protein belongs to the terpene synthase family. Tpsa subfamily. The cofactor is Mg(2+).

It localises to the cytoplasm. The catalysed reaction is (2E,6E)-farnesyl diphosphate = (-)-vetispiradiene + diphosphate. The protein operates within secondary metabolite biosynthesis; terpenoid biosynthesis. Functionally, sesquiterpene synthase that catalyzes the formation of vetispiradiene from trans,trans-farnesyl diphosphate. The initial internal cyclization produces the monocyclic intermediate germacrene A. The chain is Vetispiradiene synthase 2 from Hyoscyamus muticus (Egyptian henbane).